Reading from the N-terminus, the 34-residue chain is Potassium channel toxin alpha-KTx 6 hetlaxin (34 aa).

Intrachain disulfides connect C3–C24, C9–C29, C13–C31, and C19–C34. At C34 the chain carries Cysteine amide.

In terms of processing, contains 4 disulfide bonds. Expressed by the venom gland.

Its subcellular location is the secreted. Its function is as follows. Binds to voltage-gated potassium channels Kv1.3/KCNA3 (IC(50)=0.48 uM) and Kv1.1/KCNA1 (IC(50)=6.7 uM) and inhibits channel activity. This chain is Potassium channel toxin alpha-KTx 6 hetlaxin, found in Heterometrus laoticus (Thai giant scorpion).